The chain runs to 75 residues: Protein Tlp homolog (75 aa).

It belongs to the Tlp family.

This is Protein Tlp homolog from Clostridium acetobutylicum (strain ATCC 824 / DSM 792 / JCM 1419 / IAM 19013 / LMG 5710 / NBRC 13948 / NRRL B-527 / VKM B-1787 / 2291 / W).